A 367-amino-acid polypeptide reads, in one-letter code: Ganglioside-induced differentiation-associated protein 1-like 1 (367 aa).

The 82-residue stretch at glutamate 45 to histidine 126 folds into the GST N-terminal domain. In terms of domain architecture, GST C-terminal spans proline 174–phenylalanine 341.

The protein belongs to the GST superfamily.

In Homo sapiens (Human), this protein is Ganglioside-induced differentiation-associated protein 1-like 1 (GDAP1L1).